The sequence spans 311 residues: UDP-N-acetylenolpyruvoylglucosamine reductase (311 aa).

In terms of domain architecture, FAD-binding PCMH-type spans 28–197; the sequence is KIGGNARWLV…VSARFHLARG (170 aa). Arg177 is a catalytic residue. Catalysis depends on Ser226, which acts as the Proton donor. The active site involves Glu296.

This sequence belongs to the MurB family. FAD serves as cofactor.

The protein resides in the cytoplasm. It carries out the reaction UDP-N-acetyl-alpha-D-muramate + NADP(+) = UDP-N-acetyl-3-O-(1-carboxyvinyl)-alpha-D-glucosamine + NADPH + H(+). Its pathway is cell wall biogenesis; peptidoglycan biosynthesis. Functionally, cell wall formation. This chain is UDP-N-acetylenolpyruvoylglucosamine reductase, found in Magnetococcus marinus (strain ATCC BAA-1437 / JCM 17883 / MC-1).